Reading from the N-terminus, the 62-residue chain is Beta-defensin 33 (62 aa).

The first 20 residues, 1 to 20 (MRLLFLLFILLVCLAQTTSG), serve as a signal peptide directing secretion. Cystine bridges form between cysteine 30–cysteine 59, cysteine 37–cysteine 52, and cysteine 45–cysteine 60.

This sequence belongs to the beta-defensin family.

The protein resides in the secreted. Its function is as follows. Has antibacterial activity. This is Beta-defensin 33 (Defb33) from Mus musculus (Mouse).